The sequence spans 409 residues: Nucleoprotein (409 aa).

Disordered stretches follow at residues 1 to 32 (MASG…SSGN), 44 to 69 (LNSP…QQHG), 121 to 145 (ADVK…LRFS), 164 to 195 (RSGR…SEGD), and 238 to 259 (VDQV…DKMN). Residues 15 to 31 (PVIKLGGPKPPKVGSSG) show a composition bias toward low complexity. The tract at residues 29–160 (SSGNASWFQA…GNFRWDFIPL (132 aa)) is RNA-binding. Positions 31-156 (GNASWFQAIK…GGPDGNFRWD (126 aa)) constitute a CoV N NTD domain. Residues 164-179 (RSGRSTAASSAASSRA) are compositionally biased toward low complexity. Composition is skewed to basic and acidic residues over residues 180–192 (PSRD…RSGS) and 247–259 (KGKE…DKMN). 2 positions are modified to phosphoserine; by host: S190 and S192. Residues 215–331 (TKAKADEMAH…QCVDGVGTRP (117 aa)) form the CoV N CTD domain. The interval 226–333 (RYCKRTIPPG…VDGVGTRPKD (108 aa)) is dimerization. C320 and C323 are joined by a disulfide. Positions 326 to 409 (GVGTRPKDDE…GDSALGENEL (84 aa)) are disordered. Residues 341–358 (RSSSRPATRTSSPALRQQ) are compositionally biased toward low complexity. Over residues 368–384 (KQDDEVDKALTSDEERN) the composition is skewed to basic and acidic residues. A Phosphothreonine; by host modification is found at T378. Residue S379 is modified to Phosphoserine; by host.

The protein belongs to the gammacoronavirus nucleocapsid protein family. In terms of assembly, homooligomer. Both monomeric and oligomeric forms interact with RNA. Interacts with protein M. Interacts with NSP3; this interaction serves to tether the genome to the newly translated replicase-transcriptase complex at a very early stage of infection. Post-translationally, ADP-ribosylated. The ADP-ribosylation is retained in the virion during infection. In terms of processing, phosphorylated on serine and threonine residues.

It localises to the virion. The protein resides in the host endoplasmic reticulum-Golgi intermediate compartment. Its subcellular location is the host Golgi apparatus. Packages the positive strand viral genome RNA into a helical ribonucleocapsid (RNP) and plays a fundamental role during virion assembly through its interactions with the viral genome and membrane protein M. Plays an important role in enhancing the efficiency of subgenomic viral RNA transcription as well as viral replication. This is Nucleoprotein from Gallus gallus (Chicken).